The primary structure comprises 1260 residues: uncharacterized protein (1260 aa).

It is found in the plastid. The protein localises to the chloroplast. This is an uncharacterized protein from Ostreococcus tauri.